Here is a 322-residue protein sequence, read N- to C-terminus: MDGNHTIWIEKYRPRRLDEMVGQKDIVVRLQSYVKTGNLPHLLFTGSAGIGKTTAAVALAREFFGDSWQTNFREMNASDERGIDVVRNQIKEFARTSPLAGATFKILFLDEADALTTDAQAALRRTMETYARTCRFILSCNYSSKIIDPIQSRCAIYRFRPLDREAVIEETRRIAAAEGLTVTEGALDAIVYVASGDMRKAINALQGAAILRTDIDEETIFEITATARPEEIDELLDLSIGGRFDEAEQALLELTHVRGIAPNELINQCYRALVQRDIDRTLKVKLIDALGETDFRLSEGASSDIQMEALLARFVLAAEQHR.

An ATP-binding site is contributed by 46–53 (GSAGIGKT).

The protein belongs to the activator 1 small subunits family. RfcS subfamily. In terms of assembly, heteromultimer composed of small subunits (RfcS) and large subunits (RfcL).

In terms of biological role, part of the RFC clamp loader complex which loads the PCNA sliding clamp onto DNA. This is Replication factor C small subunit from Methanoculleus marisnigri (strain ATCC 35101 / DSM 1498 / JR1).